The primary structure comprises 71 residues: Long neurotoxin 1 (71 aa).

5 disulfides stabilise this stretch: Cys3/Cys20, Cys14/Cys41, Cys26/Cys30, Cys45/Cys56, and Cys57/Cys62.

Belongs to the three-finger toxin family. Long-chain subfamily. Type II alpha-neurotoxin sub-subfamily. As to expression, expressed by the venom gland.

The protein localises to the secreted. Functionally, binds with high affinity to muscular (alpha-1/CHRNA1) and neuronal (alpha-7/CHRNA7) nicotinic acetylcholine receptor (nAChR) and hinders acetylcholine binding to the receptor, thereby impairing neuromuscular and neuronal transmission. The chain is Long neurotoxin 1 from Naja annulata annulata (Banded water cobra).